The following is a 1071-amino-acid chain: ATP-dependent helicase/deoxyribonuclease subunit B (1071 aa).

It belongs to the helicase family. AddB/RexB type 2 subfamily. As to quaternary structure, heterodimer of AddA and RexB. It depends on Mg(2+) as a cofactor.

Its function is as follows. The heterodimer acts as both an ATP-dependent DNA helicase and an ATP-dependent, dual-direction single-stranded exonuclease. Recognizes the chi site generating a DNA molecule suitable for the initiation of homologous recombination. This subunit has 5' -&gt; 3' nuclease activity but not helicase activity. The chain is ATP-dependent helicase/deoxyribonuclease subunit B from Streptococcus pyogenes serotype M28 (strain MGAS6180).